The sequence spans 458 residues: tRNA modification GTPase MnmE (458 aa).

Residues Arg26, Glu88, and Arg127 each contribute to the (6S)-5-formyl-5,6,7,8-tetrahydrofolate site. The region spanning 224–378 (GLSTAIIGRP…IEDRINQLFF (155 aa)) is the TrmE-type G domain. Asn234 is a binding site for K(+). GTP contacts are provided by residues 234–239 (NVGKSS), 253–259 (TDIAGTT), and 278–281 (DTAG). Ser238 contributes to the Mg(2+) binding site. K(+)-binding residues include Thr253, Ile255, and Thr258. Thr259 contributes to the Mg(2+) binding site. Lys458 serves as a coordination point for (6S)-5-formyl-5,6,7,8-tetrahydrofolate.

The protein belongs to the TRAFAC class TrmE-Era-EngA-EngB-Septin-like GTPase superfamily. TrmE GTPase family. In terms of assembly, homodimer. Heterotetramer of two MnmE and two MnmG subunits. Requires K(+) as cofactor.

The protein localises to the cytoplasm. In terms of biological role, exhibits a very high intrinsic GTPase hydrolysis rate. Involved in the addition of a carboxymethylaminomethyl (cmnm) group at the wobble position (U34) of certain tRNAs, forming tRNA-cmnm(5)s(2)U34. This Streptococcus pyogenes serotype M18 (strain MGAS8232) protein is tRNA modification GTPase MnmE.